Reading from the N-terminus, the 298-residue chain is GTP cyclohydrolase FolE2 (298 aa).

The protein belongs to the GTP cyclohydrolase IV family.

It carries out the reaction GTP + H2O = 7,8-dihydroneopterin 3'-triphosphate + formate + H(+). The protein operates within cofactor biosynthesis; 7,8-dihydroneopterin triphosphate biosynthesis; 7,8-dihydroneopterin triphosphate from GTP: step 1/1. Converts GTP to 7,8-dihydroneopterin triphosphate. The protein is GTP cyclohydrolase FolE2 of Pseudomonas aeruginosa (strain UCBPP-PA14).